A 399-amino-acid chain; its full sequence is Acetate kinase (399 aa).

Asn9 contacts Mg(2+). Lys16 contacts ATP. Arg90 contributes to the substrate binding site. Asp147 functions as the Proton donor/acceptor in the catalytic mechanism. ATP contacts are provided by residues 207–211 (HLGNG), 281–283 (DFR), and 333–337 (GVGEN). A Mg(2+)-binding site is contributed by Glu387.

The protein belongs to the acetokinase family. As to quaternary structure, homodimer. Mg(2+) serves as cofactor. It depends on Mn(2+) as a cofactor.

It localises to the cytoplasm. It carries out the reaction acetate + ATP = acetyl phosphate + ADP. Its pathway is metabolic intermediate biosynthesis; acetyl-CoA biosynthesis; acetyl-CoA from acetate: step 1/2. Catalyzes the formation of acetyl phosphate from acetate and ATP. Can also catalyze the reverse reaction. The chain is Acetate kinase from Mycobacterium sp. (strain KMS).